A 517-amino-acid polypeptide reads, in one-letter code: ATP synthase subunit alpha 1 (517 aa).

Gly174–Thr181 lines the ATP pocket.

It belongs to the ATPase alpha/beta chains family. F-type ATPases have 2 components, CF(1) - the catalytic core - and CF(0) - the membrane proton channel. CF(1) has five subunits: alpha(3), beta(3), gamma(1), delta(1), epsilon(1). CF(0) has three main subunits: a(1), b(2) and c(9-12). The alpha and beta chains form an alternating ring which encloses part of the gamma chain. CF(1) is attached to CF(0) by a central stalk formed by the gamma and epsilon chains, while a peripheral stalk is formed by the delta and b chains.

It localises to the cell inner membrane. The catalysed reaction is ATP + H2O + 4 H(+)(in) = ADP + phosphate + 5 H(+)(out). Its function is as follows. Produces ATP from ADP in the presence of a proton gradient across the membrane. The alpha chain is a regulatory subunit. In Albidiferax ferrireducens (strain ATCC BAA-621 / DSM 15236 / T118) (Rhodoferax ferrireducens), this protein is ATP synthase subunit alpha 1.